The sequence spans 69 residues: Beta-defensin 114 (69 aa).

The signal sequence occupies residues 1–26 (MRIFYYLHFLCYVTFILPATCTLVNA). Cystine bridges form between C29/C57, C36/C50, and C40/C58.

Belongs to the beta-defensin family. In terms of tissue distribution, expressed in epididymis, predominantly in the caput (at protein level).

It localises to the secreted. Functionally, has a salt-sensitive antimicrobial activity against Gram-negative bacteria, including E.coli, Gram-positive, including S.aureus, and fungi, including C.albicans. Binds to and neutralizes bacterial lipopolysaccharides (LPS), abolishing TNF production by macrophages challenged with LPS. Rescues the LPS-induced reduction of sperm motility in vitro and may protect from LPS-induced lethality. This Homo sapiens (Human) protein is Beta-defensin 114 (DEFB114).